The following is a 310-amino-acid chain: N-acetyl-gamma-glutamyl-phosphate reductase (310 aa).

Cys-117 is a catalytic residue.

This sequence belongs to the NAGSA dehydrogenase family. Type 2 subfamily.

It is found in the cytoplasm. It catalyses the reaction N-acetyl-L-glutamate 5-semialdehyde + phosphate + NADP(+) = N-acetyl-L-glutamyl 5-phosphate + NADPH + H(+). It participates in amino-acid biosynthesis; L-arginine biosynthesis; N(2)-acetyl-L-ornithine from L-glutamate: step 3/4. Functionally, catalyzes the NADPH-dependent reduction of N-acetyl-5-glutamyl phosphate to yield N-acetyl-L-glutamate 5-semialdehyde. The chain is N-acetyl-gamma-glutamyl-phosphate reductase from Brucella abortus (strain S19).